The sequence spans 369 residues: Muscleblind-like protein 1 (369 aa).

4 C3H1-type zinc fingers span residues 13 to 41 (WLTL…HPSK), 47 to 73 (NGRV…HPPP), 178 to 206 (TDRL…HPAD), and 214 to 240 (DNTV…HPPA).

This sequence belongs to the muscleblind family.

The protein localises to the nucleus. It localises to the cytoplasm. The protein resides in the cytoplasmic granule. Involved in pre-mRNA alternative splicing regulation. Binds to CUG triplet repeat in RNA. This is Muscleblind-like protein 1 (MBNL1) from Gallus gallus (Chicken).